The chain runs to 62 residues: Sperm protamine P1 (62 aa).

Residues 1-62 are disordered; sequence MARYRRHSRS…RYSRRGRRRY (62 aa).

The protein belongs to the protamine P1 family. As to expression, testis.

Its subcellular location is the nucleus. It localises to the chromosome. Functionally, protamines substitute for histones in the chromatin of sperm during the haploid phase of spermatogenesis. They compact sperm DNA into a highly condensed, stable and inactive complex. The chain is Sperm protamine P1 (PRM1) from Neophascogale lorentzii (Long-clawed marsupial mouse).